The primary structure comprises 162 residues: tRNA (cytidine(34)-2'-O)-methyltransferase (162 aa).

S-adenosyl-L-methionine-binding residues include L80, G102, L124, and S132.

It belongs to the class IV-like SAM-binding methyltransferase superfamily. RNA methyltransferase TrmH family. TrmL subfamily. In terms of assembly, homodimer.

The protein localises to the cytoplasm. It catalyses the reaction cytidine(34) in tRNA + S-adenosyl-L-methionine = 2'-O-methylcytidine(34) in tRNA + S-adenosyl-L-homocysteine + H(+). The enzyme catalyses 5-carboxymethylaminomethyluridine(34) in tRNA(Leu) + S-adenosyl-L-methionine = 5-carboxymethylaminomethyl-2'-O-methyluridine(34) in tRNA(Leu) + S-adenosyl-L-homocysteine + H(+). In terms of biological role, methylates the ribose at the nucleotide 34 wobble position in the two leucyl isoacceptors tRNA(Leu)(CmAA) and tRNA(Leu)(cmnm5UmAA). Catalyzes the methyl transfer from S-adenosyl-L-methionine to the 2'-OH of the wobble nucleotide. This chain is tRNA (cytidine(34)-2'-O)-methyltransferase, found in Acidovorax sp. (strain JS42).